Consider the following 492-residue polypeptide: uncharacterized protein (492 aa).

266-273 contributes to the ATP binding site; the sequence is GIQGTGKS.

This sequence belongs to the AAA ATPase family. Highly divergent.

The protein resides in the plastid. The protein localises to the chloroplast. This is an uncharacterized protein from Pyropia yezoensis (Susabi-nori).